The sequence spans 330 residues: MALLDVKELSVHFGDKKTPFKAVDRISYQVAQGEVLGIVGESGSGKSVSSLAIMGLIDHPGRVSAESLQFENTDLLTLESKAKRQLIGADVAMIFQDPMTSLNPAYTVGFQIMEALKTHEGGTKKARKDRTLELLKLVGIPDPESRIDVYPHQLSGGMSQRVMIAMAIACRPKLLIADEPTTALDVTIQAQIMELLLELQKKECMSLILITHDLALVAEAAERIIVMYAGQIVEEGTAKDIFREPKHPYTQALLRSLPEFAEGKSRLESLQGVVPGKYDRPTGCLLNPRCPYATEYCRQVEPQLHHIGSRKVKCHTPLNEQGNPVEYQGA.

In terms of domain architecture, ABC transporter spans 6 to 254 (VKELSVHFGD…PKHPYTQALL (249 aa)). 40–47 (GESGSGKS) contacts ATP.

This sequence belongs to the ABC transporter superfamily.

The protein resides in the cell inner membrane. The enzyme catalyses a dipeptide(out) + ATP + H2O = a dipeptide(in) + ADP + phosphate + H(+). Its function is as follows. Part of the ABC transporter DppBCDF involved in dipeptide transport. Responsible for energy coupling to the transport system. The polypeptide is Dipeptide transport ATP-binding protein DppD (dppD) (Haemophilus influenzae (strain ATCC 51907 / DSM 11121 / KW20 / Rd)).